A 75-amino-acid polypeptide reads, in one-letter code: UPF0352 protein YejL (75 aa).

The protein belongs to the UPF0352 family.

The chain is UPF0352 protein YejL from Escherichia coli O139:H28 (strain E24377A / ETEC).